The sequence spans 335 residues: Non-structural protein P9-1 (335 aa).

The span at 27–42 (FNANTKNQNQNTSNTQ) shows a compositional bias: low complexity. Positions 27–48 (FNANTKNQNQNTSNTQSSGGIT) are disordered.

This chain is Non-structural protein P9-1 (S9), found in Fiji disease virus (isolate Sugarcane) (FDV).